The sequence spans 395 residues: Ribosomal RNA large subunit methyltransferase G (395 aa).

The protein belongs to the methyltransferase superfamily. RlmG family.

The protein localises to the cytoplasm. It carries out the reaction guanosine(1835) in 23S rRNA + S-adenosyl-L-methionine = N(2)-methylguanosine(1835) in 23S rRNA + S-adenosyl-L-homocysteine + H(+). Functionally, specifically methylates the guanine in position 1835 (m2G1835) of 23S rRNA. This is Ribosomal RNA large subunit methyltransferase G from Yersinia pseudotuberculosis serotype O:1b (strain IP 31758).